The sequence spans 232 residues: MVSKISKRMQQISQGIDRSALYGLSDAVVMLKERATARFDETVEIAMNLGIDPRHANQMVRGVVTMPNGTGVNVRVAVFATSSKADEAREAGADIVGGEDLFEIVKGGQIDFDRCIATPDMMPLVGRLGRILGPRGIMPNLRVGTVTTDVATAVRESKSGAVDFRSEKAGIIHAGIGKVSFENKKIEENVLAFVSAVVKAKPSVAKGDYVKRVTLSSTMGCGIKVDLSSFSV.

The protein belongs to the universal ribosomal protein uL1 family. In terms of assembly, part of the 50S ribosomal subunit.

Binds directly to 23S rRNA. The L1 stalk is quite mobile in the ribosome, and is involved in E site tRNA release. Its function is as follows. Protein L1 is also a translational repressor protein, it controls the translation of the L11 operon by binding to its mRNA. The protein is Large ribosomal subunit protein uL1 of Liberibacter asiaticus (Citrus greening disease).